The sequence spans 118 residues: Beta-2-microglobulin (118 aa).

A signal peptide spans 1 to 21 (MGSRWGIAVLGLFCFVSCLEA). One can recognise an Ig-like C1-type domain in the interval 26–113 (PKIQVYSRHP…VHEGVKKTVK (88 aa)). Residues cysteine 46 and cysteine 101 are joined by a disulfide bond.

The protein belongs to the beta-2-microglobulin family. In terms of assembly, heterodimer of an alpha chain and a beta chain. Beta-2-microglobulin is the beta-chain of major histocompatibility complex class I molecules.

It localises to the secreted. In terms of biological role, component of the class I major histocompatibility complex (MHC). Involved in the presentation of peptide antigens to the immune system. This Ornithorhynchus anatinus (Duckbill platypus) protein is Beta-2-microglobulin (B2M).